The sequence spans 337 residues: ELAV-like protein 1-A (337 aa).

3 consecutive RRM domains span residues 20-109 (TNLI…FARP), 117-197 (ANLY…FAAN), and 255-333 (WCIF…FKTS).

Belongs to the RRM elav family. As to quaternary structure, interacts (via RRM3) with cirbp. Unable to form oligomers. Part of a ribonucleoprotein (RNP) complex, at least composed of elavl1/elrA and/or elavl2/elrB, igf2bp3/vg1RBP, ddx6/Xp54, ybx2/frgy2, lsm14b/rap55b and, in a subset of RNP complexes, stau1/staufen. In terms of tissue distribution, ubiquitously expressed in adults.

The protein resides in the cytoplasm. The protein localises to the cell cortex. Its function is as follows. RNA-binding protein that binds to the 3'-UTR region of mRNAs and increases their stability. Involved in embryonic stem cells (ESCs) differentiation: preferentially binds mRNAs that are not methylated by N6-methyladenosine (m6A), stabilizing them, promoting ESCs differentiation. Binds to poly-U elements and AU-rich elements (AREs) in the 3'-UTR of target mRNAs. May be involved in cytoplasmic mRNA polyadenylation. Acts cooperatively with cribp to stabilize AU-rich sequence (ARE)-containing mRNAs. May play a role during gastrulation. Required for the vegetal localization of vg1 mRNA. This Xenopus laevis (African clawed frog) protein is ELAV-like protein 1-A (elavl1-a).